Here is a 490-residue protein sequence, read N- to C-terminus: Ketol-acid reductoisomerase (NADP(+)) (490 aa).

The KARI N-terminal Rossmann domain occupies 17–208 (LAQCEFMNAD…GGHRAGVLKS (192 aa)). NADP(+) contacts are provided by residues 45–48 (CGAQ), R68, R76, S78, and 108–110 (DKQ). The active site involves H132. NADP(+) is bound at residue G158. KARI C-terminal knotted domains follow at residues 209–353 (SFIA…AEQE) and 355–486 (FDNG…MSAM). Residues D217, E221, E389, and E393 each coordinate Mg(2+). S414 lines the substrate pocket.

The protein belongs to the ketol-acid reductoisomerase family. It depends on Mg(2+) as a cofactor.

It catalyses the reaction (2R)-2,3-dihydroxy-3-methylbutanoate + NADP(+) = (2S)-2-acetolactate + NADPH + H(+). The catalysed reaction is (2R,3R)-2,3-dihydroxy-3-methylpentanoate + NADP(+) = (S)-2-ethyl-2-hydroxy-3-oxobutanoate + NADPH + H(+). It participates in amino-acid biosynthesis; L-isoleucine biosynthesis; L-isoleucine from 2-oxobutanoate: step 2/4. Its pathway is amino-acid biosynthesis; L-valine biosynthesis; L-valine from pyruvate: step 2/4. Involved in the biosynthesis of branched-chain amino acids (BCAA). Catalyzes an alkyl-migration followed by a ketol-acid reduction of (S)-2-acetolactate (S2AL) to yield (R)-2,3-dihydroxy-isovalerate. In the isomerase reaction, S2AL is rearranged via a Mg-dependent methyl migration to produce 3-hydroxy-3-methyl-2-ketobutyrate (HMKB). In the reductase reaction, this 2-ketoacid undergoes a metal-dependent reduction by NADPH to yield (R)-2,3-dihydroxy-isovalerate. The sequence is that of Ketol-acid reductoisomerase (NADP(+)) from Pseudoalteromonas translucida (strain TAC 125).